Here is a 188-residue protein sequence, read N- to C-terminus: Elongation factor P (188 aa).

Belongs to the elongation factor P family.

The protein resides in the cytoplasm. It participates in protein biosynthesis; polypeptide chain elongation. In terms of biological role, involved in peptide bond synthesis. Stimulates efficient translation and peptide-bond synthesis on native or reconstituted 70S ribosomes in vitro. Probably functions indirectly by altering the affinity of the ribosome for aminoacyl-tRNA, thus increasing their reactivity as acceptors for peptidyl transferase. In Rickettsia akari (strain Hartford), this protein is Elongation factor P.